Reading from the N-terminus, the 360-residue chain is Isocitrate dehydrogenase [NAD] subunit 1, mitochondrial (360 aa).

Residues 1–11 (MLNRTIAKRTL) constitute a mitochondrion transit peptide. Substrate is bound by residues Arg-109, Arg-140, and Asp-228. Asp-228 contributes to the Mg(2+) binding site.

This sequence belongs to the isocitrate and isopropylmalate dehydrogenases family. As to quaternary structure, octamer of two non-identical subunits IDH1 and IDH2. The cofactor is Mg(2+). It depends on Mn(2+) as a cofactor.

Its subcellular location is the mitochondrion. The enzyme catalyses D-threo-isocitrate + NAD(+) = 2-oxoglutarate + CO2 + NADH. Its activity is regulated as follows. Allosterically regulated by several compounds including AMP, NAD(+), and citrate. In terms of biological role, performs an essential role in the oxidative function of the citric acid cycle. Also binds RNA; specifically to the 5'-untranslated leaders of mitochondrial mRNAs. In Saccharomyces cerevisiae (strain ATCC 204508 / S288c) (Baker's yeast), this protein is Isocitrate dehydrogenase [NAD] subunit 1, mitochondrial (IDH1).